The chain runs to 330 residues: 4-hydroxythreonine-4-phosphate dehydrogenase (330 aa).

Residues H136 and T137 each coordinate substrate. Residues H166, H211, and H266 each contribute to the a divalent metal cation site. K274, N283, and R292 together coordinate substrate.

This sequence belongs to the PdxA family. Homodimer. The cofactor is Zn(2+). Requires Mg(2+) as cofactor. Co(2+) serves as cofactor.

The protein localises to the cytoplasm. The catalysed reaction is 4-(phosphooxy)-L-threonine + NAD(+) = 3-amino-2-oxopropyl phosphate + CO2 + NADH. Its pathway is cofactor biosynthesis; pyridoxine 5'-phosphate biosynthesis; pyridoxine 5'-phosphate from D-erythrose 4-phosphate: step 4/5. Functionally, catalyzes the NAD(P)-dependent oxidation of 4-(phosphooxy)-L-threonine (HTP) into 2-amino-3-oxo-4-(phosphooxy)butyric acid which spontaneously decarboxylates to form 3-amino-2-oxopropyl phosphate (AHAP). This is 4-hydroxythreonine-4-phosphate dehydrogenase from Sodalis glossinidius (strain morsitans).